The following is a 415-amino-acid chain: Neuromedin-U receptor 2 (415 aa).

The Extracellular portion of the chain corresponds to 1-49; it reads MSGMEKLQNASWIYQQKLEDPFQKHLNSTEEYLAFLCGPRRSHFFLPVS. Asn9 and Asn27 each carry an N-linked (GlcNAc...) asparagine glycan. Residues 50–70 form a helical membrane-spanning segment; that stretch reads VVYVPIFVVGVIGNVLVCLVI. The Cytoplasmic segment spans residues 71-82; that stretch reads LQHQAMKTPTNY. The helical transmembrane segment at 83–103 threads the bilayer; that stretch reads YLFSLAVSDLLVLLLGMPLEV. Topologically, residues 104-123 are extracellular; that stretch reads YEMWRNYPFLFGPVGCYFKT. Cys119 and Cys204 are joined by a disulfide. Residues 124–146 form a helical membrane-spanning segment; it reads ALFETVCFASILSITTVSVERYV. Topologically, residues 147-165 are cytoplasmic; that stretch reads AILHPFRAKLQSTRRRALR. A helical membrane pass occupies residues 166–186; the sequence is ILGIVWGFSVLFSLPNTSIHG. Residues 187–214 lie on the Extracellular side of the membrane; the sequence is IKFHYFPNGSLVPGSATCTVIKPMWIYN. Asn194 carries N-linked (GlcNAc...) asparagine glycosylation. A helical transmembrane segment spans residues 215–235; that stretch reads FIIQVTSFLFYLLPMTVISVL. Residues 236–265 lie on the Cytoplasmic side of the membrane; sequence YYLMALRLKKDKSLEADEGNANIQRPCRKS. Residues 266–286 form a helical membrane-spanning segment; sequence VNKMLFVLVLVFAICWAPFHI. Over 287–301 the chain is Extracellular; it reads DRLFFSFVEEWSESL. Residues 302 to 322 form a helical membrane-spanning segment; it reads AAVFNLVHVVSGVFFYLSSAV. The Cytoplasmic segment spans residues 323–415; the sequence is NPIIYNLLSR…NYQSFHFNKT (93 aa).

This sequence belongs to the G-protein coupled receptor 1 family. Predominantly expressed in the CNS, particularly in the medulla oblongata, pontine reticular formation, spinal cord, and thalamus. High level in testis whereas lower levels are present in a variety of peripheral tissues including the gastrointestinal tract, genitourinary tract, liver, pancreas, adrenal gland, thyroid gland, lung, trachea, spleen and thymus.

It is found in the cell membrane. Functionally, receptor for the neuromedin-U and neuromedin-S neuropeptides. The chain is Neuromedin-U receptor 2 (NMUR2) from Homo sapiens (Human).